A 265-amino-acid polypeptide reads, in one-letter code: Histidine racemase (265 aa).

Cysteine 67 (proton acceptor) is an active-site residue. Catalysis depends on cysteine 209, which acts as the Proton donor.

Belongs to the histidine racemase family. As to quaternary structure, homodimer.

The enzyme catalyses L-histidine = D-histidine. Activity is not affected by buffer composition (PO(4) or Tris), ions (SO(4)(2-), Mg(2+) and EDTA) or the PLP inhibitor hydroxylamine. However, the activity is hindered by iodoacetamide and Hg(2+), which are known inhibitors of enzymes with catalytic thiols. Functionally, cofactor-independent isomerase that catalyzes the reversible conversion of L-histidine to D-histidine. Shows weak activity with L,L-lanthionine. The catalytic turnover is 10'000-fold faster with L-histidine than with L,L-lanthionine. May play a role in growth of F.nucleatum. The protein is Histidine racemase of Fusobacterium nucleatum subsp. nucleatum (strain ATCC 25586 / DSM 15643 / BCRC 10681 / CIP 101130 / JCM 8532 / KCTC 2640 / LMG 13131 / VPI 4355).